The primary structure comprises 1208 residues: MKSLAGHVVKYGKHRERRSFARISEVLELPNLIEIQTDSYQWFLDEGLREMFEDILPIDDFNGNLSLEFVDYELKEPKYTVAEARAHDANYSAPLHVTLRLTNRETGEIKAQEVFFGDFPLMTEQGTFIINGAERVIVSQLVRSPGVYFHGKVDKNGKEGFGSTVIPNRGAWLEMETDAKDISYVRIDRTRKIPLTVLVRALGFGSDDTIFEIFGDSETLRNTVEKDLHKNASDSRTEEGLKDVYERLRPGEPKTADSSRNLLNARFFDPKRYDLANVGRYKVNKKLDLKTRLLNLTLAETLVDPETGEIIVEKGTVLTHQVMETLAPFIENGLNSVTYYPSEDGVVTDPMTVQVIKVFSPKDPEREVNVIGNGYPEAPVKTVRPADIIASMSYFLNLMEGIGNVDDIDHLGNRRIRSVGELLQNQFRIGLARMERVVRERMSIQDTETLTPQQLINIRPVVASIKEFFGSSQLSQFMDQTNPLGELTHKRRLSALGPGGLTRDRAGYEVRDVHYSHYGRMCPIETPEGPNIGLINSLSSYAKVNKFGFIETPYRRVDRQTGRVTDQIDYLTADIEDHYIVAQANSPLNEDGTFAQDVVMARAQSENLEVSIDKVDYMDVSPKQVVAVATACIPFLENDDSNRALMGANMQRQAVPLINPQAPWVGTGMEYKSAHDSGAALLCKHDGVVEFVDASQIRVRRDNGALDKYDITKFRRSNSGTSYNQRPIVHLGEKVEKGDTLADGPSMEQGEMALGQNVLSVSMTWEGYNYEDAIIMSRRLVKDDVYTSIHIEEYESEARDTKLGPEEITREIPNVGEDALKDLDEMGIIRIGAEVKDGDLLVGKVTPKGVTELSAEERLLHAIFGEKAREVRDTSLRVPHGGGGIVHDVKIFTREAGDELSPGVNMLVRVYIVQKRKIHEGDKMAGRHGNKGVVSRIMPEEDMPFLPDGTPIDIMLNPLGVPSRMNIGQVLELHLGMAARQLGIHVATPVFDGASDEDVWETVREAGMASEAKTVLYDGRTGEPFDGRVSVGVMYMIKLAHMVDDKLHARSIGPYSLVTQQPLGGKAQFGGQRFGEMEVWALEAYGAAYTLQEILTSKSDDVVGRVKTYEAIVKGEPIPKPGVPESFRVLVKELQSLGLDMRVLDIKDAEIELRDMDDEDDDLITVDALTKFAEQQTAKELEKKAAEQVEDERQDVIQNFETAEDKLD.

This sequence belongs to the RNA polymerase beta chain family. The RNAP catalytic core consists of 2 alpha, 1 beta, 1 beta' and 1 omega subunit. When a sigma factor is associated with the core the holoenzyme is formed, which can initiate transcription.

The catalysed reaction is RNA(n) + a ribonucleoside 5'-triphosphate = RNA(n+1) + diphosphate. Its function is as follows. DNA-dependent RNA polymerase catalyzes the transcription of DNA into RNA using the four ribonucleoside triphosphates as substrates. In Enterococcus faecium (Streptococcus faecium), this protein is DNA-directed RNA polymerase subunit beta.